A 213-amino-acid chain; its full sequence is MAGRHALVWLREDAQWQAVTSGAQPRLQQWFAAGLPAVVARGDGSQAPGTLRLGVPLPPSEGKQRLALQAHVAGIARCTAPLTLDAVMPHAPLAVQPALQALLAQAHAHALHPHVFGSFAWQALTGLTYVHAQSDLDLLWSIQTPEQACAVLTLVQRWEQQHGLRADGELRLPDDNAVNWREYAGNAQQVLVKSNQDCRLLPRAALFPARSAA.

Residues aspartate 135 and aspartate 137 contribute to the active site.

It belongs to the MdcG family.

The enzyme catalyses apo-[malonate decarboxylase ACP] + 2'-(5''-triphospho-alpha-D-ribosyl)-3'-dephospho-CoA = holo-[malonate decarboxylase ACP] + diphosphate. Functionally, transfers 2'-(5-triphosphoribosyl)-3'-dephosphocoenzyme-A to the apo-[acyl-carrier-protein] of the malonate decarboxylase to yield holo-[acyl-carrier-protein]. The polypeptide is Phosphoribosyl-dephospho-CoA transferase (Xanthomonas axonopodis pv. citri (strain 306)).